Reading from the N-terminus, the 162-residue chain is MGVTTAARSLLLTEFVSAFFLAMRYFFKPKPTLNYPFEKGPISPRFRGEHALRRYPNGEERCIACKLCEAVCPAQAITIEAGPRRNDGTRRTERYDIDMVKCIYCGLCQEACPVDAIVEGPNFEFATETREELYYDKAKLLANGDRWEREIAKHMALDAPYR.

4Fe-4S ferredoxin-type domains lie at 52–82 (LRRYPNGEERCIACKLCEAVCPAQAITIEAG) and 93–122 (ERYDIDMVKCIYCGLCQEACPVDAIVEGPN). [4Fe-4S] cluster contacts are provided by C62, C65, C68, C72, C102, C105, C108, and C112.

It belongs to the complex I 23 kDa subunit family. NDH-1 is composed of 14 different subunits. Subunits NuoA, H, J, K, L, M, N constitute the membrane sector of the complex. The cofactor is [4Fe-4S] cluster.

The protein localises to the cell inner membrane. It catalyses the reaction a quinone + NADH + 5 H(+)(in) = a quinol + NAD(+) + 4 H(+)(out). NDH-1 shuttles electrons from NADH, via FMN and iron-sulfur (Fe-S) centers, to quinones in the respiratory chain. The immediate electron acceptor for the enzyme in this species is believed to be ubiquinone. Couples the redox reaction to proton translocation (for every two electrons transferred, four hydrogen ions are translocated across the cytoplasmic membrane), and thus conserves the redox energy in a proton gradient. This chain is NADH-quinone oxidoreductase subunit I 2, found in Rhodopseudomonas palustris (strain BisA53).